The following is a 266-amino-acid chain: Gas vesicle protein L (266 aa).

This sequence belongs to the gas vesicle GvpF/GvpL family.

Its subcellular location is the gas vesicle. In terms of biological role, might be involved in nucleating gas vesicle formation. A minor component of the gas vesicle. Gas vesicles are hollow, gas filled proteinaceous nanostructures found in some microorganisms. It is not clear what function gas vesicles perform in soil bacteria. This is Gas vesicle protein L from Streptomyces sp. (strain CB03234).